A 256-amino-acid polypeptide reads, in one-letter code: Nuclear shuttle protein (256 aa).

The Bipartite nuclear localization signal motif lies at 21-42 (YQGFRRTAIVTRHDGKRRQHQS). A Nuclear localization signal motif is present at residues 81–96 (QLGKIEPNRCRSYIKL). Positions 150-187 (ELFGARINSHGNLAVMPSLKDRFYIRHLLKRVLSVDKD) are interaction with Arabidopsis thaliana NSI protein.

It belongs to the begomovirus nuclear shuttle protein family. As to quaternary structure, binds to single-stranded and double-stranded viral DNA. Interacts with the host nuclear shuttle interacting (NSI) protein. This interaction may allow NSP to recruit NSI monomers to the viral genome and thus regulate nuclear export of viral genome by NSP.

The protein resides in the host nucleus. It localises to the host cytoplasm. The protein localises to the host cell membrane. Binds to the genomic viral ssDNA, shuttles it into and out of the cell nucleus. Begomoviruses use 2 proteins to transport their DNA from cell to cell. The nuclear shuttle protein (NSP) shuttles it between nucleus and cytoplasm and the movement protein (MP) probably transports the DNA-NSP complex to the cell periphery and facilitates movement across the cell wall. This is Nuclear shuttle protein from Macroptilium lathyroides (Lima bean).